A 193-amino-acid polypeptide reads, in one-letter code: uncharacterized protein (193 aa).

Positions Met1–Ile144 are disordered. Positions Asn29 to Asn86 are enriched in low complexity. The span at Lys103–Lys118 shows a compositional bias: polar residues. Residues Asn119–Asn140 are compositionally biased toward low complexity. Residues Tyr158–Phe180 traverse the membrane as a helical segment.

It localises to the membrane. This is an uncharacterized protein from Dictyostelium discoideum (Social amoeba).